The following is a 567-amino-acid chain: Potassium-transporting ATPase potassium-binding subunit (567 aa).

11 helical membrane passes run 3-23 (FIGW…VKPL), 64-84 (LTFT…IYAV), 136-156 (ALTH…MALI), 179-199 (LYVL…QGMP), 254-274 (LSNF…TNVF), 285-305 (WAIL…AYWA), 330-350 (FGIV…CGAV), 357-376 (FTAL…EIIV), 421-441 (MLAI…AVVL), 473-495 (AFGG…MFVG), and 527-547 (GGLF…LTFF).

Belongs to the KdpA family. The system is composed of three essential subunits: KdpA, KdpB and KdpC.

The protein resides in the cell inner membrane. Its function is as follows. Part of the high-affinity ATP-driven potassium transport (or Kdp) system, which catalyzes the hydrolysis of ATP coupled with the electrogenic transport of potassium into the cytoplasm. This subunit binds the periplasmic potassium ions and delivers the ions to the membrane domain of KdpB through an intramembrane tunnel. The protein is Potassium-transporting ATPase potassium-binding subunit of Rhodopseudomonas palustris (strain ATCC BAA-98 / CGA009).